The primary structure comprises 240 residues: E3 ubiquitin-protein ligase LubX (240 aa).

2 consecutive U-box domains span residues 30–103 (TTPT…QTNY) and 125–198 (EIPD…RKRE).

In terms of processing, ubiquitinated in the presence of host E1 ubiquitin-activating enzyme, E2 ubiquitin-conjugating enzyme and ubiquitin.

Its subcellular location is the secreted. The protein resides in the host cell. It catalyses the reaction S-ubiquitinyl-[E2 ubiquitin-conjugating enzyme]-L-cysteine + [acceptor protein]-L-lysine = [E2 ubiquitin-conjugating enzyme]-L-cysteine + N(6)-ubiquitinyl-[acceptor protein]-L-lysine.. In terms of biological role, effector proteins function to alter host cell physiology and promote bacterial survival in host tissues. This protein is an E3 ubiquitin ligase that interferes with host's ubiquitination pathway. This chain is E3 ubiquitin-protein ligase LubX (lubX), found in Legionella pneumophila (strain Paris).